The following is a 200-amino-acid chain: Imidazole glycerol phosphate synthase subunit HisH (200 aa).

A Glutamine amidotransferase type-1 domain is found at 3–200; it reads EVALIDAGGA…LRNFLEMDAA (198 aa). C78 functions as the Nucleophile in the catalytic mechanism. Catalysis depends on residues H179 and E181.

Heterodimer of HisH and HisF.

It is found in the cytoplasm. The enzyme catalyses 5-[(5-phospho-1-deoxy-D-ribulos-1-ylimino)methylamino]-1-(5-phospho-beta-D-ribosyl)imidazole-4-carboxamide + L-glutamine = D-erythro-1-(imidazol-4-yl)glycerol 3-phosphate + 5-amino-1-(5-phospho-beta-D-ribosyl)imidazole-4-carboxamide + L-glutamate + H(+). It catalyses the reaction L-glutamine + H2O = L-glutamate + NH4(+). It functions in the pathway amino-acid biosynthesis; L-histidine biosynthesis; L-histidine from 5-phospho-alpha-D-ribose 1-diphosphate: step 5/9. Its function is as follows. IGPS catalyzes the conversion of PRFAR and glutamine to IGP, AICAR and glutamate. The HisH subunit catalyzes the hydrolysis of glutamine to glutamate and ammonia as part of the synthesis of IGP and AICAR. The resulting ammonia molecule is channeled to the active site of HisF. The protein is Imidazole glycerol phosphate synthase subunit HisH of Xylella fastidiosa (strain Temecula1 / ATCC 700964).